The chain runs to 1026 residues: Multidrug resistance protein MdtC (1026 aa).

A run of 11 helical transmembrane segments spans residues 15 to 35, 333 to 353, 360 to 380, 387 to 407, 431 to 451, 463 to 483, 528 to 548, 853 to 873, 897 to 917, 953 to 973, and 984 to 1004; these read ILIAAAITLCGILGFRLLPVA, EVEETLAISVALVILVVFLFL, LIPAVAVPVSLIGTFAAMYLC, LSLMALTIATGFVVDDAIVVL, VGFTVISMSLSLVAVFLPLLL, FAVTLSVAIGISLVVSLTLTP, LVGVVFLGTVALNIWLYIAIP, LILIVAAIATVYIVLGILYES, LFNAPFSLIALIGIMLLIGIV, PIMMTTLAALFGALPLVLSGG, and ITIVGGLVMSQLLTLYTTPVV.

The protein belongs to the resistance-nodulation-cell division (RND) (TC 2.A.6) family. MdtC subfamily. Part of a tripartite efflux system composed of MdtA, MdtB and MdtC. MdtC forms a heteromultimer with MdtB.

It localises to the cell inner membrane. This chain is Multidrug resistance protein MdtC, found in Salmonella newport (strain SL254).